A 325-amino-acid chain; its full sequence is MSQITLEELPGVGPATAEKLKEAGFNTIEAVAVASPSELATTAEIGESTAAKIINAARQAADIGGFETGDIVLERRKMVGKLTTGCMEFDEMMGGGIETQAITELYGEFGSGKTQLAHQFAVNVQMDREHGGLNGSVIIIDTENTFRPERIAQMVKGLSEKYGMELDPEEFLQNIHVARAYNSNHQILLVDSATDLANELREMGKPVRLLIVDSLMAHFRAEYVGRGTLADRQQKLNKHMHGLLRFGDLFNASVVVTNQVMAKPDAFFGDPTRPVGGHVVGHTATFRLYLRKSKGDKRIIRLVDSPNLPEGEAVIAVTTAGLTDQ.

107–114 (GEFGSGKT) contacts ATP.

This sequence belongs to the eukaryotic RecA-like protein family.

Its function is as follows. Involved in DNA repair and in homologous recombination. Binds and assemble on single-stranded DNA to form a nucleoprotein filament. Hydrolyzes ATP in a ssDNA-dependent manner and promotes DNA strand exchange between homologous DNA molecules. The polypeptide is DNA repair and recombination protein RadA (Methanosarcina barkeri (strain Fusaro / DSM 804)).